The following is a 312-amino-acid chain: Malate dehydrogenase (312 aa).

NAD(+) contacts are provided by residues 12-17 (GAGFTG) and Asp36. Substrate is bound by residues Arg87 and Arg93. Residues Asn100 and 123 to 125 (LTN) contribute to the NAD(+) site. A substrate-binding site is contributed by Asn125. A Phosphoserine modification is found at Ser149. Arg156 is a binding site for substrate. His180 functions as the Proton acceptor in the catalytic mechanism.

This sequence belongs to the LDH/MDH superfamily. MDH type 3 family.

It carries out the reaction (S)-malate + NAD(+) = oxaloacetate + NADH + H(+). In terms of biological role, catalyzes the reversible oxidation of malate to oxaloacetate. This is Malate dehydrogenase from Bacillus licheniformis (strain ATCC 14580 / DSM 13 / JCM 2505 / CCUG 7422 / NBRC 12200 / NCIMB 9375 / NCTC 10341 / NRRL NRS-1264 / Gibson 46).